The chain runs to 256 residues: MRAQPVISYEYPLNERIRTLLRLEDLYAKIAHFLGGDAPQDHHVALLTLFEVLEVAGRADLKVDLVQELERQRQILISFRHNPEISEQALSGALYEIEQASSSLLAMAGKIGQYLRENEWLMAIRSRASIPGGVCQFDLPSYHYWLNRDPEQRRGDLEGWLRPMIPIREGLTIVLRLLRASAQPERQLARGGTYQLTMGGRGAQMLQLRLAPAEAVVPEISANKYAINIRFMLSETVVRPRLAERDIPFEITFCSL.

The protein belongs to the ZapD family. Interacts with FtsZ.

It localises to the cytoplasm. Functionally, cell division factor that enhances FtsZ-ring assembly. Directly interacts with FtsZ and promotes bundling of FtsZ protofilaments, with a reduction in FtsZ GTPase activity. This Aromatoleum aromaticum (strain DSM 19018 / LMG 30748 / EbN1) (Azoarcus sp. (strain EbN1)) protein is Cell division protein ZapD.